The following is a 294-amino-acid chain: Urease accessory protein UreD (294 aa).

The segment at 1 to 22 (MSVEKPVAAGRQNSKATGRHKG) is disordered.

It belongs to the UreD family. As to quaternary structure, ureD, UreF and UreG form a complex that acts as a GTP-hydrolysis-dependent molecular chaperone, activating the urease apoprotein by helping to assemble the nickel containing metallocenter of UreC. The UreE protein probably delivers the nickel.

Its subcellular location is the cytoplasm. Functionally, required for maturation of urease via the functional incorporation of the urease nickel metallocenter. The chain is Urease accessory protein UreD from Alcanivorax borkumensis (strain ATCC 700651 / DSM 11573 / NCIMB 13689 / SK2).